The following is a 266-amino-acid chain: Ribosomal RNA small subunit methyltransferase A (266 aa).

6 residues coordinate S-adenosyl-L-methionine: Asn13, Leu15, Gly40, Glu61, Asp86, and Asn110.

The protein belongs to the class I-like SAM-binding methyltransferase superfamily. rRNA adenine N(6)-methyltransferase family. RsmA subfamily.

It localises to the cytoplasm. The catalysed reaction is adenosine(1518)/adenosine(1519) in 16S rRNA + 4 S-adenosyl-L-methionine = N(6)-dimethyladenosine(1518)/N(6)-dimethyladenosine(1519) in 16S rRNA + 4 S-adenosyl-L-homocysteine + 4 H(+). In terms of biological role, specifically dimethylates two adjacent adenosines (A1518 and A1519) in the loop of a conserved hairpin near the 3'-end of 16S rRNA in the 30S particle. May play a critical role in biogenesis of 30S subunits. This chain is Ribosomal RNA small subunit methyltransferase A, found in Hydrogenovibrio crunogenus (strain DSM 25203 / XCL-2) (Thiomicrospira crunogena).